A 108-amino-acid polypeptide reads, in one-letter code: uncharacterized protein (108 aa).

Positions 1–23 (MVDELEKNQVQPQETEENKENAL) are disordered.

This is an uncharacterized protein from Ureaplasma parvum serovar 3 (strain ATCC 700970).